A 98-amino-acid polypeptide reads, in one-letter code: UPF0235 protein azo3464 (98 aa).

It belongs to the UPF0235 family.

The protein is UPF0235 protein azo3464 of Azoarcus sp. (strain BH72).